Here is a 255-residue protein sequence, read N- to C-terminus: Hydroxyacylglutathione hydrolase (255 aa).

Zn(2+) is bound by residues histidine 53, histidine 55, aspartate 57, histidine 58, histidine 110, aspartate 127, and histidine 165.

The protein belongs to the metallo-beta-lactamase superfamily. Glyoxalase II family. As to quaternary structure, monomer. The cofactor is Zn(2+).

It catalyses the reaction an S-(2-hydroxyacyl)glutathione + H2O = a 2-hydroxy carboxylate + glutathione + H(+). The protein operates within secondary metabolite metabolism; methylglyoxal degradation; (R)-lactate from methylglyoxal: step 2/2. Functionally, thiolesterase that catalyzes the hydrolysis of S-D-lactoyl-glutathione to form glutathione and D-lactic acid. This chain is Hydroxyacylglutathione hydrolase, found in Xanthomonas campestris pv. campestris (strain 8004).